Here is a 124-residue protein sequence, read N- to C-terminus: Small ribosomal subunit protein uS12 (124 aa).

A 3-methylthioaspartic acid modification is found at Asp-89.

The protein belongs to the universal ribosomal protein uS12 family. As to quaternary structure, part of the 30S ribosomal subunit. Contacts proteins S8 and S17. May interact with IF1 in the 30S initiation complex.

Its function is as follows. With S4 and S5 plays an important role in translational accuracy. Functionally, interacts with and stabilizes bases of the 16S rRNA that are involved in tRNA selection in the A site and with the mRNA backbone. Located at the interface of the 30S and 50S subunits, it traverses the body of the 30S subunit contacting proteins on the other side and probably holding the rRNA structure together. The combined cluster of proteins S8, S12 and S17 appears to hold together the shoulder and platform of the 30S subunit. This is Small ribosomal subunit protein uS12 from Campylobacter hominis (strain ATCC BAA-381 / DSM 21671 / CCUG 45161 / LMG 19568 / NCTC 13146 / CH001A).